Here is a 164-residue protein sequence, read N- to C-terminus: Peptidyl-prolyl cis-trans isomerase A-like 4F (164 aa).

The region spanning 7 to 163 (FFEITRDGKP…KKITIADCGQ (157 aa)) is the PPIase cyclophilin-type domain.

This sequence belongs to the cyclophilin-type PPIase family. PPIase A subfamily.

The protein localises to the cytoplasm. The catalysed reaction is [protein]-peptidylproline (omega=180) = [protein]-peptidylproline (omega=0). Functionally, PPIases accelerate the folding of proteins. It catalyzes the cis-trans isomerization of proline imidic peptide bonds in oligopeptides. This chain is Peptidyl-prolyl cis-trans isomerase A-like 4F, found in Homo sapiens (Human).